Consider the following 122-residue polypeptide: Small ribosomal subunit protein uS12 (122 aa).

A 3-methylthioaspartic acid modification is found at D89.

This sequence belongs to the universal ribosomal protein uS12 family. In terms of assembly, part of the 30S ribosomal subunit. Contacts proteins S8 and S17. May interact with IF1 in the 30S initiation complex.

With S4 and S5 plays an important role in translational accuracy. Functionally, interacts with and stabilizes bases of the 16S rRNA that are involved in tRNA selection in the A site and with the mRNA backbone. Located at the interface of the 30S and 50S subunits, it traverses the body of the 30S subunit contacting proteins on the other side and probably holding the rRNA structure together. The combined cluster of proteins S8, S12 and S17 appears to hold together the shoulder and platform of the 30S subunit. The chain is Small ribosomal subunit protein uS12 from Neorickettsia sennetsu (strain ATCC VR-367 / Miyayama) (Ehrlichia sennetsu).